The sequence spans 233 residues: Orotidine 5'-phosphate decarboxylase (233 aa).

Residues Asp-11, Lys-34, 61–70 (DLKLHDIPNT), Thr-117, Arg-179, Gln-189, Gly-209, and Arg-210 each bind substrate. The active-site Proton donor is Lys-63.

It belongs to the OMP decarboxylase family. Type 1 subfamily. As to quaternary structure, homodimer.

The catalysed reaction is orotidine 5'-phosphate + H(+) = UMP + CO2. It participates in pyrimidine metabolism; UMP biosynthesis via de novo pathway; UMP from orotate: step 2/2. Functionally, catalyzes the decarboxylation of orotidine 5'-monophosphate (OMP) to uridine 5'-monophosphate (UMP). The sequence is that of Orotidine 5'-phosphate decarboxylase from Streptococcus agalactiae serotype V (strain ATCC BAA-611 / 2603 V/R).